A 506-amino-acid chain; its full sequence is Aspartic proteinase A1 (506 aa).

Positions 1–24 (MKIYSRTVAVSLIVSFLLCFSAFA) are cleaved as a signal peptide. A propeptide spans 25–64 (ERNDGTFRVGLKKLKLDSKNRLAARVESKQEKPLRAYRLG) (activation peptide). Residues 82–503 (YYGEIAIGTP…DFGNEQVGFA (422 aa)) form the Peptidase A1 domain. The active site involves Asp-100. Intrachain disulfides connect Cys-113/Cys-119 and Cys-278/Cys-282. Asp-287 is a catalytic residue. The Saposin B-type domain maps to 312-417 (VVSQQCKTVV…NELCERLPSP (106 aa)). Disulfide bonds link Cys-317–Cys-411, Cys-342–Cys-383, Cys-348–Cys-380, and Cys-425–Cys-462. N-linked (GlcNAc...) asparagine glycosylation occurs at Asn-397.

The protein belongs to the peptidase A1 family. As to expression, expressed in roots, leaves, stems, petals, carpels, seed pods and dry seeds.

Its subcellular location is the vacuole. In terms of biological role, involved in the breakdown of propeptides of storage proteins in protein-storage vacuoles. Possesses aspartic protease activity in vitro. In Arabidopsis thaliana (Mouse-ear cress), this protein is Aspartic proteinase A1 (APA1).